A 234-amino-acid polypeptide reads, in one-letter code: MRKRLKTRIKICGMCSPEDMEMAALYGADAVGFITEVPIESPRKLDSDTAASLISKLPECLDSVMVIMPENSSRALELIEKVRPDIVQIHSNLPSVELEVIREKTDIPIIKTLSVPAGMGASRVQSPVKRLLDEVRRLEESGVVDSILLDSGIAGKTGGTGYVHDWDLSRRIADETELPLILAGGLKPENVQEAIRIVSPYAVDAASGVEILGKKDAVKIRSFIEEVRCANAFL.

It belongs to the TrpF family.

The catalysed reaction is N-(5-phospho-beta-D-ribosyl)anthranilate = 1-(2-carboxyphenylamino)-1-deoxy-D-ribulose 5-phosphate. Its pathway is amino-acid biosynthesis; L-tryptophan biosynthesis; L-tryptophan from chorismate: step 3/5. The chain is N-(5'-phosphoribosyl)anthranilate isomerase 1 (trpF1) from Methanosarcina mazei (strain ATCC BAA-159 / DSM 3647 / Goe1 / Go1 / JCM 11833 / OCM 88) (Methanosarcina frisia).